The chain runs to 362 residues: tRNA-specific 2-thiouridylase MnmA 3 (362 aa).

Residues 11–18 (GMSGGIDS) and M37 each bind ATP. The Nucleophile role is filled by C91. Residues C91 and C188 are joined by a disulfide bond. Residue G115 coordinates ATP. The tract at residues 137–139 (KDQ) is interaction with tRNA. C188 serves as the catalytic Cysteine persulfide intermediate. Residues 296–297 (RY) form an interaction with tRNA region.

This sequence belongs to the MnmA/TRMU family.

Its subcellular location is the cytoplasm. It carries out the reaction S-sulfanyl-L-cysteinyl-[protein] + uridine(34) in tRNA + AH2 + ATP = 2-thiouridine(34) in tRNA + L-cysteinyl-[protein] + A + AMP + diphosphate + H(+). Catalyzes the 2-thiolation of uridine at the wobble position (U34) of tRNA, leading to the formation of s(2)U34. The sequence is that of tRNA-specific 2-thiouridylase MnmA 3 from Bacteroides fragilis (strain YCH46).